The chain runs to 312 residues: Erlin (312 aa).

Residues 1–3 (MLT) lie on the Cytoplasmic side of the membrane. A helical transmembrane segment spans residues 4-24 (ELALGLFALWIAIFSQALHKI). The Lumenal portion of the chain corresponds to 25–312 (EEGHVGVYYR…FVMGTTQQTV (288 aa)). Asparagine 104 carries N-linked (GlcNAc...) asparagine glycosylation.

This sequence belongs to the band 7/mec-2 family. In terms of assembly, seems to form a multimeric complex. In terms of tissue distribution, expressed in the germline only.

Its subcellular location is the endoplasmic reticulum membrane. This chain is Erlin, found in Caenorhabditis elegans.